Here is a 613-residue protein sequence, read N- to C-terminus: Penicillin-binding protein activator LpoA (613 aa).

Residues 1–29 (MNSMLNFTHKRKSVSRLLAPVALAVILAG) form the signal peptide. C30 carries the N-palmitoyl cysteine lipid modification. C30 carries the S-diacylglycerol cysteine lipid modification.

The protein belongs to the LpoA family. In terms of assembly, interacts with PBP1a.

The protein localises to the cell outer membrane. Functionally, regulator of peptidoglycan synthesis that is essential for the function of penicillin-binding protein 1A (PBP1a). This Photobacterium profundum (strain SS9) protein is Penicillin-binding protein activator LpoA.